The following is a 433-amino-acid chain: 3-phosphoshikimate 1-carboxyvinyltransferase (433 aa).

Residues K23, S24, and R28 each contribute to the 3-phosphoshikimate site. K23 contacts phosphoenolpyruvate. Phosphoenolpyruvate-binding residues include G95 and R123. 3-phosphoshikimate contacts are provided by S170, S171, Q172, S198, D317, and K344. Q172 is a phosphoenolpyruvate binding site. D317 serves as the catalytic Proton acceptor. 3 residues coordinate phosphoenolpyruvate: R348, R391, and K416.

This sequence belongs to the EPSP synthase family. As to quaternary structure, monomer.

It is found in the cytoplasm. The enzyme catalyses 3-phosphoshikimate + phosphoenolpyruvate = 5-O-(1-carboxyvinyl)-3-phosphoshikimate + phosphate. It participates in metabolic intermediate biosynthesis; chorismate biosynthesis; chorismate from D-erythrose 4-phosphate and phosphoenolpyruvate: step 6/7. Catalyzes the transfer of the enolpyruvyl moiety of phosphoenolpyruvate (PEP) to the 5-hydroxyl of shikimate-3-phosphate (S3P) to produce enolpyruvyl shikimate-3-phosphate and inorganic phosphate. In Neisseria gonorrhoeae (strain NCCP11945), this protein is 3-phosphoshikimate 1-carboxyvinyltransferase.